The primary structure comprises 973 residues: MSELKTISIRGAREHNLKGIDLDLPRNKLIVMTGLSGSGKSSLAFDTIYAEGQRRYVESLSAYARQFLEMMQKPDVDQIDGLSPAISIEQKTTSRNPRSTVGTVTEIYDYMRLLFARVGVPYSPATGLPIESQTVSQMVDRILAFEEGTRLYILAPIVRGRKGEYKKELAELMKKGFQRVKVDGQFYEIADVPALDKKYKHDIDVVVDRAVVRPDMAARLADSLETCLKLADGLAIAEFADKPLPPEDTAAGGSANKSLNETHERVLFSEKFACPVSGFTIPEIEPRLFSFNNPFGACPSCDGLGSQQKVDENLIVPEPARTLRDGAIAPWAKSSSPYYNQTLEALGKAFGFKLSSKWTDLSKEAQHAILQGTDDKIEFNYQDGARSYKTVKNFEGIVPNLERRWKETDSAWAREEIERYMSAAPCPACAGYRLKPEALAVKINKLHIGEVTQMSIRKARDWFEVLPENLNAKQNEIAVRILKEIRERLRFLNDVGLDYLSLSRNSGTLSGGESQRIRLASQIGSGLTGVLYVLDEPSIGLHQRDNARLLETLKHLRDIGNTVIVVEHDEDAILTADYVVDIGPAAGIHGGQVIAEGTPQDVMANPKSLTGKYLSGELGVAVPAERRKPKKGREIKVFGARGNNLQNVTAAVPLGVFTAVTGVSGGGKSTFLIETLYKSAARRVMGAREIPAEHDRIDGFEFIDKVIDIDQSPIGRTPRSNPATYTGAFTPIRDWFAGLPEAKARGYAPGRFSFNVKGGRCEACQGDGVIKIEMHFLPDVYVTCDVCHGKRYNRETLDVTFKGKSIADVLDMTVEEGVEFFAAVPAVRDKLQSLFDVGLGYIKVGQQANTLSGGEAQRVKLAKELSKRSTGRTLYILDEPTTGLHFHDVNKLLEMLHALVEQGNSVVVIEHNLEVIKTADWIIDIGPEGGTGGGEVVATGTPEDIVKVERSYTGHFLKELLDRRPAGKREAAE.

34–41 lines the ATP pocket; sequence GLSGSGKS. ABC transporter domains follow at residues 331–609 and 629–958; these read WAKS…PKSL and PKKG…HFLK. An ATP-binding site is contributed by 662 to 669; the sequence is GVSGGGKS. Residues 761–787 form a C4-type zinc finger; the sequence is CEACQGDGVIKIEMHFLPDVYVTCDVC.

This sequence belongs to the ABC transporter superfamily. UvrA family. As to quaternary structure, forms a heterotetramer with UvrB during the search for lesions.

It localises to the cytoplasm. In terms of biological role, the UvrABC repair system catalyzes the recognition and processing of DNA lesions. UvrA is an ATPase and a DNA-binding protein. A damage recognition complex composed of 2 UvrA and 2 UvrB subunits scans DNA for abnormalities. When the presence of a lesion has been verified by UvrB, the UvrA molecules dissociate. This chain is UvrABC system protein A, found in Agrobacterium fabrum (strain C58 / ATCC 33970) (Agrobacterium tumefaciens (strain C58)).